The chain runs to 111 residues: Ribosome-binding factor A (111 aa).

It belongs to the RbfA family. Monomer. Binds 30S ribosomal subunits, but not 50S ribosomal subunits or 70S ribosomes.

It localises to the cytoplasm. Its function is as follows. One of several proteins that assist in the late maturation steps of the functional core of the 30S ribosomal subunit. Associates with free 30S ribosomal subunits (but not with 30S subunits that are part of 70S ribosomes or polysomes). Required for efficient processing of 16S rRNA. May interact with the 5'-terminal helix region of 16S rRNA. The chain is Ribosome-binding factor A from Helicobacter pylori (strain J99 / ATCC 700824) (Campylobacter pylori J99).